A 957-amino-acid polypeptide reads, in one-letter code: Glycine dehydrogenase (decarboxylating) (957 aa).

Residue Lys708 is modified to N6-(pyridoxal phosphate)lysine.

This sequence belongs to the GcvP family. In terms of assembly, the glycine cleavage system is composed of four proteins: P, T, L and H. It depends on pyridoxal 5'-phosphate as a cofactor.

The enzyme catalyses N(6)-[(R)-lipoyl]-L-lysyl-[glycine-cleavage complex H protein] + glycine + H(+) = N(6)-[(R)-S(8)-aminomethyldihydrolipoyl]-L-lysyl-[glycine-cleavage complex H protein] + CO2. The glycine cleavage system catalyzes the degradation of glycine. The P protein binds the alpha-amino group of glycine through its pyridoxal phosphate cofactor; CO(2) is released and the remaining methylamine moiety is then transferred to the lipoamide cofactor of the H protein. This is Glycine dehydrogenase (decarboxylating) from Shigella boydii serotype 18 (strain CDC 3083-94 / BS512).